Consider the following 399-residue polypeptide: S-adenosylmethionine synthase (399 aa).

His17 provides a ligand contact to ATP. A Mg(2+)-binding site is contributed by Asp19. A K(+)-binding site is contributed by Glu52. 2 residues coordinate L-methionine: Glu65 and Gln109. The flexible loop stretch occupies residues 109 to 119 (QSADIAQGVDA). Residues 177–179 (DSK), 243–244 (KF), Asp252, 258–259 (RK), Ala275, and Lys279 each bind ATP. An L-methionine-binding site is contributed by Asp252. Lys283 is an L-methionine binding site.

This sequence belongs to the AdoMet synthase family. As to quaternary structure, homotetramer; dimer of dimers. It depends on Mg(2+) as a cofactor. K(+) serves as cofactor.

The protein localises to the cytoplasm. It catalyses the reaction L-methionine + ATP + H2O = S-adenosyl-L-methionine + phosphate + diphosphate. It functions in the pathway amino-acid biosynthesis; S-adenosyl-L-methionine biosynthesis; S-adenosyl-L-methionine from L-methionine: step 1/1. Catalyzes the formation of S-adenosylmethionine (AdoMet) from methionine and ATP. The overall synthetic reaction is composed of two sequential steps, AdoMet formation and the subsequent tripolyphosphate hydrolysis which occurs prior to release of AdoMet from the enzyme. This chain is S-adenosylmethionine synthase, found in Bradyrhizobium sp. (strain BTAi1 / ATCC BAA-1182).